The following is a 582-amino-acid chain: 2-succinyl-5-enolpyruvyl-6-hydroxy-3-cyclohexene-1-carboxylate synthase (582 aa).

The protein belongs to the TPP enzyme family. MenD subfamily. Homodimer. Mg(2+) serves as cofactor. The cofactor is Mn(2+). Requires thiamine diphosphate as cofactor.

It catalyses the reaction isochorismate + 2-oxoglutarate + H(+) = 5-enolpyruvoyl-6-hydroxy-2-succinyl-cyclohex-3-ene-1-carboxylate + CO2. Its pathway is quinol/quinone metabolism; 1,4-dihydroxy-2-naphthoate biosynthesis; 1,4-dihydroxy-2-naphthoate from chorismate: step 2/7. The protein operates within cofactor biosynthesis; phylloquinone biosynthesis. Catalyzes the thiamine diphosphate-dependent decarboxylation of 2-oxoglutarate and the subsequent addition of the resulting succinic semialdehyde-thiamine pyrophosphate anion to isochorismate to yield 2-succinyl-5-enolpyruvyl-6-hydroxy-3-cyclohexene-1-carboxylate (SEPHCHC). The protein is 2-succinyl-5-enolpyruvyl-6-hydroxy-3-cyclohexene-1-carboxylate synthase of Prochlorococcus marinus (strain MIT 9303).